The following is a 437-amino-acid chain: MNNLVAIVGRPNVGKSTLFNRLTKTRQAIVNEEAGTTRDRQYGKSEWLGREFSVVDTGGWVVNSDDIFEEEIRKQVLLAVEEADVILFVVDVMNGVTDLDMQVATILRRANSPVIMVANKTDNNELQYNAPEFYKLGLGDPYCISAITGSGTGDLMDLIVSKFNKETSEILDDDIPRFAVVGRPNAGKSSIVNAFIGEDRNIVTEIAGTTRDSIYTRYNKFGFDFYLVDTAGIRKKNKVNEDLEYYSVVRSIRSIENADVCILMLDATRGVESQDLNILSLIQKNQKGLVVVINKWDLIEDKTAKMMKEFEATIRSRFAPFVDFPIIFASALTKQRILKVLEEARNVYENRTTKIPTARLNEEMLPLIEAYPPPSNKGKYIKIKYITQLPNTQVPSFVYFANLPQYVKEPYKRFLENKMREKWNLTGTPINIYIRQK.

2 consecutive EngA-type G domains span residues 3–167 and 176–352; these read NLVA…NKET and PRFA…ENRT. Residues 9–16, 56–60, 119–122, 182–189, 229–233, and 294–297 contribute to the GTP site; these read GRPNVGKS, DTGGW, NKTD, GRPNAGKS, DTAGI, and NKWD. The 85-residue stretch at 353–437 folds into the KH-like domain; it reads TKIPTARLNE…TPINIYIRQK (85 aa).

It belongs to the TRAFAC class TrmE-Era-EngA-EngB-Septin-like GTPase superfamily. EngA (Der) GTPase family. Associates with the 50S ribosomal subunit.

In terms of biological role, GTPase that plays an essential role in the late steps of ribosome biogenesis. The chain is GTPase Der from Bacteroides thetaiotaomicron (strain ATCC 29148 / DSM 2079 / JCM 5827 / CCUG 10774 / NCTC 10582 / VPI-5482 / E50).